A 474-amino-acid chain; its full sequence is ATP synthase subunit beta (474 aa).

153 to 160 contributes to the ATP binding site; sequence GGAGVGKT.

Belongs to the ATPase alpha/beta chains family. F-type ATPases have 2 components, CF(1) - the catalytic core - and CF(0) - the membrane proton channel. CF(1) has five subunits: alpha(3), beta(3), gamma(1), delta(1), epsilon(1). CF(0) has three main subunits: a(1), b(2) and c(9-12). The alpha and beta chains form an alternating ring which encloses part of the gamma chain. CF(1) is attached to CF(0) by a central stalk formed by the gamma and epsilon chains, while a peripheral stalk is formed by the delta and b chains.

The protein resides in the cell inner membrane. It catalyses the reaction ATP + H2O + 4 H(+)(in) = ADP + phosphate + 5 H(+)(out). Functionally, produces ATP from ADP in the presence of a proton gradient across the membrane. The catalytic sites are hosted primarily by the beta subunits. This Rickettsia prowazekii (strain Madrid E) protein is ATP synthase subunit beta.